Consider the following 244-residue polypeptide: Carboxy-S-adenosyl-L-methionine synthase (244 aa).

S-adenosyl-L-methionine is bound by residues tyrosine 41, 66 to 68 (GCS), 91 to 92 (DN), asparagine 134, and arginine 201.

Belongs to the class I-like SAM-binding methyltransferase superfamily. Cx-SAM synthase family. As to quaternary structure, homodimer.

It catalyses the reaction prephenate + S-adenosyl-L-methionine = carboxy-S-adenosyl-L-methionine + 3-phenylpyruvate + H2O. Functionally, catalyzes the conversion of S-adenosyl-L-methionine (SAM) to carboxy-S-adenosyl-L-methionine (Cx-SAM). The sequence is that of Carboxy-S-adenosyl-L-methionine synthase from Colwellia psychrerythraea (strain 34H / ATCC BAA-681) (Vibrio psychroerythus).